The following is a 209-amino-acid chain: Thymidylate kinase (209 aa).

Residue 10 to 17 (GLDGAGKS) participates in ATP binding.

It belongs to the thymidylate kinase family.

The enzyme catalyses dTMP + ATP = dTDP + ADP. Functionally, phosphorylation of dTMP to form dTDP in both de novo and salvage pathways of dTTP synthesis. The chain is Thymidylate kinase from Francisella tularensis subsp. tularensis (strain FSC 198).